The following is a 395-amino-acid chain: DDB1- and CUL4-associated factor 4-like protein 2 (395 aa).

2 WD repeats span residues 268–307 and 312–351; these read SHDSAVTSLQILQDGQFLVSSDMTGTIKLWDLRATKCVTQ and VNNSAYLPVHVNEEEGVVAAVGQDCYTRIWSLRHGHLLTT.

This chain is DDB1- and CUL4-associated factor 4-like protein 2 (DCAF4L2), found in Homo sapiens (Human).